Here is a 346-residue protein sequence, read N- to C-terminus: S-adenosylmethionine:tRNA ribosyltransferase-isomerase (346 aa).

It belongs to the QueA family. As to quaternary structure, monomer.

It is found in the cytoplasm. The catalysed reaction is 7-aminomethyl-7-carbaguanosine(34) in tRNA + S-adenosyl-L-methionine = epoxyqueuosine(34) in tRNA + adenine + L-methionine + 2 H(+). It functions in the pathway tRNA modification; tRNA-queuosine biosynthesis. In terms of biological role, transfers and isomerizes the ribose moiety from AdoMet to the 7-aminomethyl group of 7-deazaguanine (preQ1-tRNA) to give epoxyqueuosine (oQ-tRNA). The sequence is that of S-adenosylmethionine:tRNA ribosyltransferase-isomerase from Lysinibacillus sphaericus (strain C3-41).